A 531-amino-acid chain; its full sequence is Non-muscle caldesmon (531 aa).

The segment at Ala20–Gln200 is myosin and calmodulin-binding. The tract at residues Tyr21–Lys379 is disordered. Basic and acidic residues predominate over residues Gln41–Glu50. Over residues Gly54–Ala68 the composition is skewed to polar residues. A compositionally biased stretch (basic and acidic residues) spans Arg93–Asp116. Polar residues predominate over residues Thr120–Asn133. Ser123 is subject to Phosphoserine. A compositionally biased stretch (basic and acidic residues) spans Gly143 to Met156. The segment covering Val162 to Gln172 has biased composition (polar residues). Over residues Gln200–Thr227 the composition is skewed to basic and acidic residues. Ser249 carries the phosphoserine; by CDK1 modification. Basic and acidic residues-rich tracts occupy residues Ala271–Gln297 and Glu305–Pro372. Positions Glu303 to Lys360 are tropomyosin-binding. At Ser382 the chain carries Phosphoserine. Residue Lys384 forms a Glycyl lysine isopeptide (Lys-Gly) (interchain with G-Cter in SUMO2) linkage. Residues Leu392–Ile424 are strong actin-binding. Ser395 carries the phosphoserine modification. Positions Lys402–Lys412 are tropomyosin-binding. The tract at residues Trp454–Phe460 is calmodulin-binding. Positions Ser458 to Val531 are disordered. A compositionally biased stretch (polar residues) spans Val459–Lys471. A Phosphoserine; by CDK1 modification is found at Ser462. Position 468 is a phosphothreonine; by CDK1 (Thr468). Phosphoserine; by CDK1 is present on residues Ser491 and Ser497. A compositionally biased stretch (basic and acidic residues) spans Ser503–Val522. Positions Arg506–Val531 are weak actin-binding. Ser527 carries the post-translational modification Phosphoserine; by CDK1.

The protein belongs to the caldesmon family. In non-muscle cells, phosphorylation by CDK1 during mitosis causes caldesmon to dissociate from microfilaments. Phosphorylation reduces caldesmon binding to actin, myosin, and calmodulin as well as its inhibition of actomyosin ATPase activity. Phosphorylation also occurs in both quiescent and dividing smooth muscle cells with similar effects on the interaction with actin and calmodulin and on microfilaments reorganization. CDK1-mediated phosphorylation promotes Schwann cell migration during peripheral nerve regeneration. In terms of tissue distribution, high-molecular-weight caldesmon (h-caldesmon) is predominantly expressed in smooth muscles, whereas low-molecular-weight caldesmon (l-caldesmon) is widely distributed in non-muscle tissues and cells. Not expressed in skeletal muscle or heart.

It is found in the cytoplasm. The protein resides in the cytoskeleton. It localises to the myofibril. The protein localises to the stress fiber. Its function is as follows. Actin- and myosin-binding protein implicated in the regulation of actomyosin interactions in smooth muscle and nonmuscle cells (could act as a bridge between myosin and actin filaments). Stimulates actin binding of tropomyosin which increases the stabilization of actin filament structure. In muscle tissues, inhibits the actomyosin ATPase by binding to F-actin. This inhibition is attenuated by calcium-calmodulin and is potentiated by tropomyosin. Interacts with actin, myosin, two molecules of tropomyosin and with calmodulin. Also plays an essential role during cellular mitosis and receptor capping. Involved in Schwann cell migration during peripheral nerve regeneration. The sequence is that of Non-muscle caldesmon (Cald1) from Rattus norvegicus (Rat).